We begin with the raw amino-acid sequence, 394 residues long: MTDSNRIRLTWISFFSYALTGALVIVTGMVMGNIAEYFNLPISSMSNTFTFLNTGILVSIFLNAWLMEIIPLKRQLVFGFILMILAIAGLMVGHNLAIFSACMFVLGVVSGITMSIGTFLITHIYTGRQRGSRLLFTDSFFSMAGMVFPIIAATLLAQHVAWYWVYACIGVLYLAIFILTLCSDFPQLGKQAVGDSQPVRKEKWGIGVLFLSIAALCYILGQLGFIQWVPEYAAKRFGMSIEESGGLVSNFWTAYMVGMWFFSVALRFFDLQRIVTVLAALSTFMMYMFVSSQQSAMLSMYILGLGFVSSAIYTTLITLGSQQTKVSSPKLVNFILTCGTIGTMLTFVVTGPIVAHSGAHAALATANGLYLVVFVMCVLLGFVTKHRLHGHAAK.

The next 12 helical transmembrane spans lie at 11 to 31 (WISF…GMVM), 51 to 71 (FLNT…EIIP), 76 to 96 (LVFG…GHNL), 101 to 121 (ACMF…TFLI), 134 to 154 (LLFT…IAAT), 160 to 180 (VAWY…FILT), 206 to 226 (IGVL…LGFI), 246 to 266 (GLVS…SVAL), 274 to 294 (IVTV…SSQQ), 297 to 317 (MLSM…TTLI), 334 to 354 (FILT…GPIV), and 363 to 383 (LATA…LGFV).

The protein belongs to the major facilitator superfamily. TsgA family.

It localises to the cell inner membrane. The polypeptide is Protein TsgA homolog (Edwardsiella ictaluri (strain 93-146)).